The primary structure comprises 346 residues: GTPase Obg (346 aa).

The 159-residue stretch at 1–159 (MKFLDSAKIY…RTVLLRLKLI (159 aa)) folds into the Obg domain. Residues 160-327 (ADAGLVGLPN…ALRAVLAEID (168 aa)) enclose the OBG-type G domain. Residues 166–173 (GLPNAGKS), 191–195 (FTTLN), 212–215 (DIPG), 279–282 (SKVD), and 308–310 (SAA) contribute to the GTP site. Mg(2+)-binding residues include serine 173 and threonine 193.

Belongs to the TRAFAC class OBG-HflX-like GTPase superfamily. OBG GTPase family. As to quaternary structure, monomer. Mg(2+) is required as a cofactor.

The protein localises to the cytoplasm. Functionally, an essential GTPase which binds GTP, GDP and possibly (p)ppGpp with moderate affinity, with high nucleotide exchange rates and a fairly low GTP hydrolysis rate. Plays a role in control of the cell cycle, stress response, ribosome biogenesis and in those bacteria that undergo differentiation, in morphogenesis control. In Methylocella silvestris (strain DSM 15510 / CIP 108128 / LMG 27833 / NCIMB 13906 / BL2), this protein is GTPase Obg.